Consider the following 594-residue polypeptide: Arrestin domain-containing protein C584.15c (594 aa).

Polar residues predominate over residues 368-398 (NPQLQSGFTTPNLSRRNSSDFGPNSPVNIHS). Disordered regions lie at residues 368-417 (NPQL…NSNA) and 531-594 (EATR…RGVR). Low complexity predominate over residues 404–417 (SGQQPSSPASNSNA). Positions 534–552 (RPSSPTESVEIPSNTTTIA) are enriched in polar residues. Pro residues predominate over residues 565–574 (PSTPAPPLPS). Serine 584 is subject to Phosphoserine.

It belongs to the arrestin family.

In Schizosaccharomyces pombe (strain 972 / ATCC 24843) (Fission yeast), this protein is Arrestin domain-containing protein C584.15c.